The sequence spans 720 residues: Polyribonucleotide nucleotidyltransferase (720 aa).

The Mg(2+) site is built by Asp-487 and Asp-493. In terms of domain architecture, KH spans Pro-554–Ile-613. Positions Gly-623–Lys-691 constitute an S1 motif domain. The disordered stretch occupies residues Lys-691 to Glu-720. The span at Ala-703–Glu-720 shows a compositional bias: basic and acidic residues.

The protein belongs to the polyribonucleotide nucleotidyltransferase family. The cofactor is Mg(2+).

It localises to the cytoplasm. It catalyses the reaction RNA(n+1) + phosphate = RNA(n) + a ribonucleoside 5'-diphosphate. Its function is as follows. Involved in mRNA degradation. Catalyzes the phosphorolysis of single-stranded polyribonucleotides processively in the 3'- to 5'-direction. This Nitrobacter hamburgensis (strain DSM 10229 / NCIMB 13809 / X14) protein is Polyribonucleotide nucleotidyltransferase.